A 630-amino-acid chain; its full sequence is Transposase B from transposon PsiTn554 (630 aa).

Residues 216 to 302 enclose the Core-binding (CB) domain; the sequence is TYFKQLVKRY…ILEGLFSTLH (87 aa). Positions 326–513 constitute a Tyr recombinase domain; it reads AKPRFIDEFV…FDETLKNEFT (188 aa). Active-site residues include Arg363, Lys391, His465, Arg468, and His491. Tyr500 serves as the catalytic O-(3'-phospho-DNA)-tyrosine intermediate.

The protein belongs to the 'phage' integrase family.

The chain is Transposase B from transposon PsiTn554 (tnpB) from Staphylococcus aureus.